The primary structure comprises 737 residues: Serine/threonine-protein kinase dst1 (737 aa).

In terms of domain architecture, Protein kinase spans 29 to 281 (YHIQERLGKG…AKELLNHEFI (253 aa)). Residues 35-43 (LGKGSFGQV) and lysine 58 contribute to the ATP site. The active-site Proton acceptor is aspartate 149. Disordered regions lie at residues 305 to 356 (SMFE…SNNY), 372 to 475 (KDDA…TTDQ), 491 to 559 (KPIT…ISNN), and 575 to 631 (NNNI…ESLS). 4 stretches are compositionally biased toward low complexity: residues 334–345 (NNNTVTNYSTVI), 401–410 (SSCSSSSSSS), 425–444 (PITN…NKIP), and 454–473 (ATTT…STTT). Positions 491 to 503 (KPITSSNSTSVTP) are enriched in polar residues. Over residues 510 to 525 (SNNTTTTSNINTPIKP) the composition is skewed to low complexity. 2 stretches are compositionally biased toward polar residues: residues 529 to 554 (LKKS…TPLK) and 585 to 596 (SPTTGQKIIKTN). Residues 597-615 (SGGVLKSSGGLSSKRSPSS) are compositionally biased toward low complexity.

It belongs to the protein kinase superfamily. STE Ser/Thr protein kinase family. STE20 subfamily. Mg(2+) is required as a cofactor.

The catalysed reaction is L-seryl-[protein] + ATP = O-phospho-L-seryl-[protein] + ADP + H(+). It catalyses the reaction L-threonyl-[protein] + ATP = O-phospho-L-threonyl-[protein] + ADP + H(+). This is Serine/threonine-protein kinase dst1 from Dictyostelium discoideum (Social amoeba).